Reading from the N-terminus, the 1330-residue chain is ESX-3 secretion system protein EccC3 (1330 aa).

2 helical membrane passes run 43–63 (LPYL…ATGM) and 65–85 (VISP…TALY). FtsK domains are found at residues 456–662 (GEPL…SVSR), 811–1000 (RDPL…RDSN), and 1090–1280 (LAPV…ADSG). ATP is bound by residues 479–486 (GMTGSGKS), 829–836 (GGPKSGKS), and 1107–1114 (GDARSGKT).

As to quaternary structure, part of the ESX-3 / type VII secretion system (T7SS), which is composed of cytosolic and membrane components. The ESX-3 membrane complex is composed of EccB3, EccC3, EccD3 and EccE3.

The protein resides in the cell inner membrane. Part of the ESX-3 specialized secretion system, which is important for iron and zinc uptake or homeostasis. This chain is ESX-3 secretion system protein EccC3, found in Mycobacterium tuberculosis (strain CDC 1551 / Oshkosh).